Here is a 140-residue protein sequence, read N- to C-terminus: Transmembrane protein 107 (140 aa).

A run of 2 helical transmembrane segments spans residues 7–27 and 53–73; these read LVPS…TLFW and LVAA…GFLS. Asn79 carries N-linked (GlcNAc...) asparagine glycosylation. The next 2 membrane-spanning stretches (helical) occupy residues 83–103 and 113–133; these read SLLS…FIFE and IFAF…IAVF.

As to quaternary structure, part of the tectonic-like complex (also named B9 complex). Interacts with TMEM237, TMEM231, MKS1 and TMEM216.

It localises to the membrane. The protein localises to the cell projection. The protein resides in the cilium. Plays a role in cilia formation and embryonic patterning. Requires for normal Sonic hedgehog (Shh) signaling in the neural tube and acts in combination with GLI2 and GLI3 to pattern ventral and intermediate neuronal cell types. During ciliogenesis regulates the ciliary transition zone localization of some MKS complex proteins. In Rattus norvegicus (Rat), this protein is Transmembrane protein 107.